Here is a 156-residue protein sequence, read N- to C-terminus: Small ribosomal subunit protein uS7 (156 aa).

This sequence belongs to the universal ribosomal protein uS7 family. Part of the 30S ribosomal subunit. Contacts proteins S9 and S11.

Its function is as follows. One of the primary rRNA binding proteins, it binds directly to 16S rRNA where it nucleates assembly of the head domain of the 30S subunit. Is located at the subunit interface close to the decoding center, probably blocks exit of the E-site tRNA. This chain is Small ribosomal subunit protein uS7, found in Mesomycoplasma hyopneumoniae (strain 232) (Mycoplasma hyopneumoniae).